Here is a 234-residue protein sequence, read N- to C-terminus: Response regulator RppA (234 aa).

Residues 2 to 118 (RILLVEDETD…ELLARLRALQ (117 aa)) form the Response regulatory domain. Asp-53 carries the post-translational modification 4-aspartylphosphate. The ompR/PhoB-type DNA-binding region spans 126–232 (PQILTLGNFS…VPGQGYRFTL (107 aa)).

Interacts with histidine kinase Hik2; may accept phosphate from Hik2.

Member of two-component regulatory system RppA/RppB, involved in the establishment of the appropriate stoichiometry between the 2 photosystems. It senses changes in the plastoquinone (PQ) redox poise. Another group shows this two-component pair, renamed NrsR/NrsS, controls the nickel-dependent expression of the nrsBACD operon; they suggest the photosystem-related activities seen earlier are due to the expression of NrsS (RppB) in the absence of its natural substrate NrsR (RppA). May accept phosphate from Hik2 in a possible Hik2/RppA two-component system. This is Response regulator RppA from Synechocystis sp. (strain ATCC 27184 / PCC 6803 / Kazusa).